The chain runs to 115 residues: MKVVAAFLLAVLSGKASPTTGDIKDILGSVGAETEDSQIELLLKEVKGKDLAELIAAGREKLASVPSGGGGGVAVASATSGGGGGGGAPAAESKKEEKKEEKEESDDDMGFSLFE.

The interval 62–115 (LASVPSGGGGGVAVASATSGGGGGGGAPAAESKKEEKKEEKEESDDDMGFSLFE) is disordered. The span at 92-102 (ESKKEEKKEEK) shows a compositional bias: basic and acidic residues. Ser105 bears the Phosphoserine mark.

This sequence belongs to the eukaryotic ribosomal protein P1/P2 family. P1 and P2 exist as dimers at the large ribosomal subunit. Phosphorylated.

Functionally, plays an important role in the elongation step of protein synthesis. This Arabidopsis thaliana (Mouse-ear cress) protein is Large ribosomal subunit protein P2z (RPP2A).